The primary structure comprises 137 residues: Small ribosomal subunit protein uS9 (137 aa).

A disordered region spans residues 114 to 137; sequence DSRMKERKKPGLRGARRGVQFSKR. A compositionally biased stretch (basic residues) spans 118-137; that stretch reads KERKKPGLRGARRGVQFSKR.

This sequence belongs to the universal ribosomal protein uS9 family.

The sequence is that of Small ribosomal subunit protein uS9 from Rhodopirellula baltica (strain DSM 10527 / NCIMB 13988 / SH1).